Here is a 562-residue protein sequence, read N- to C-terminus: Dihydroxy-acid dehydratase (562 aa).

Residue aspartate 80 participates in Mg(2+) binding. Position 121 (cysteine 121) interacts with [2Fe-2S] cluster. Mg(2+)-binding residues include aspartate 122 and lysine 123. Lysine 123 is subject to N6-carboxylysine. Cysteine 194 contacts [2Fe-2S] cluster. Mg(2+) is bound at residue glutamate 446. The Proton acceptor role is filled by serine 472.

The protein belongs to the IlvD/Edd family. As to quaternary structure, homodimer. The cofactor is [2Fe-2S] cluster. Requires Mg(2+) as cofactor.

It carries out the reaction (2R)-2,3-dihydroxy-3-methylbutanoate = 3-methyl-2-oxobutanoate + H2O. It catalyses the reaction (2R,3R)-2,3-dihydroxy-3-methylpentanoate = (S)-3-methyl-2-oxopentanoate + H2O. It participates in amino-acid biosynthesis; L-isoleucine biosynthesis; L-isoleucine from 2-oxobutanoate: step 3/4. The protein operates within amino-acid biosynthesis; L-valine biosynthesis; L-valine from pyruvate: step 3/4. Its function is as follows. Functions in the biosynthesis of branched-chain amino acids. Catalyzes the dehydration of (2R,3R)-2,3-dihydroxy-3-methylpentanoate (2,3-dihydroxy-3-methylvalerate) into 2-oxo-3-methylpentanoate (2-oxo-3-methylvalerate) and of (2R)-2,3-dihydroxy-3-methylbutanoate (2,3-dihydroxyisovalerate) into 2-oxo-3-methylbutanoate (2-oxoisovalerate), the penultimate precursor to L-isoleucine and L-valine, respectively. This Staphylococcus aureus (strain COL) protein is Dihydroxy-acid dehydratase.